The following is a 358-amino-acid chain: Histidinol-phosphate aminotransferase (358 aa).

Lys-211 carries the post-translational modification N6-(pyridoxal phosphate)lysine.

Belongs to the class-II pyridoxal-phosphate-dependent aminotransferase family. Histidinol-phosphate aminotransferase subfamily. As to quaternary structure, homodimer. Requires pyridoxal 5'-phosphate as cofactor.

The catalysed reaction is L-histidinol phosphate + 2-oxoglutarate = 3-(imidazol-4-yl)-2-oxopropyl phosphate + L-glutamate. The protein operates within amino-acid biosynthesis; L-histidine biosynthesis; L-histidine from 5-phospho-alpha-D-ribose 1-diphosphate: step 7/9. The chain is Histidinol-phosphate aminotransferase from Blochmanniella pennsylvanica (strain BPEN).